The primary structure comprises 103 residues: Large ribosomal subunit protein bL21 (103 aa).

The protein belongs to the bacterial ribosomal protein bL21 family. As to quaternary structure, part of the 50S ribosomal subunit. Contacts protein L20.

Functionally, this protein binds to 23S rRNA in the presence of protein L20. The protein is Large ribosomal subunit protein bL21 of Marinobacter nauticus (strain ATCC 700491 / DSM 11845 / VT8) (Marinobacter aquaeolei).